Reading from the N-terminus, the 306-residue chain is Protein pxr1 (306 aa).

Positions 1-11 are enriched in basic residues; it reads MGLAAPRKRTK. Disordered regions lie at residues 1-27 and 148-241; these read MGLAAPRKRTKISHDPNNTNWSRSTSG and AQKE…SDIP. Positions 15–27 are enriched in polar residues; sequence DPNNTNWSRSTSG. Positions 25 to 79 constitute a G-patch domain; the sequence is TSGYGHKIMSSQGWTPGSFLGARNAAHADMFTAASASHIRVVVKDDTLGLGARSK. A compositionally biased stretch (basic and acidic residues) spans 182 to 191; it reads NTLKALREEQ. Positions 219–228 are enriched in basic residues; the sequence is KKERKTKKRK.

The protein belongs to the PINX1 family.

It is found in the nucleus. The protein resides in the nucleolus. Its function is as follows. Involved in rRNA-processing at A0, A1 and A2 sites and negatively regulates telomerase. In Aspergillus oryzae (strain ATCC 42149 / RIB 40) (Yellow koji mold), this protein is Protein pxr1 (pxr1).